Reading from the N-terminus, the 136-residue chain is Large ribosomal subunit protein eL27 (136 aa).

The KOW domain maps to 5–36 (MKPGKVVLVLRGKYAGRKAVVVKQQDEGVSDR).

This sequence belongs to the eukaryotic ribosomal protein eL27 family. Component of the large ribosomal subunit.

The protein localises to the cytoplasm. It localises to the cytosol. Its subcellular location is the rough endoplasmic reticulum. Its function is as follows. Component of the large ribosomal subunit. The protein is Large ribosomal subunit protein eL27 (rpl-27) of Caenorhabditis elegans.